Consider the following 356-residue polypeptide: Phospho-N-acetylmuramoyl-pentapeptide-transferase (356 aa).

10 helical membrane-spanning segments follow: residues 3–23 (QILF…PLLI), 51–71 (TMGG…AKVI), 80–100 (GLLV…DDYI), 114–134 (AKMA…LQFP), 152–172 (FGWS…ILAM), 185–205 (LATG…LWQF), 227–247 (PLDL…FLWW), 254–274 (IFMG…LAIL), 279–299 (FLLA…VIQV), and 333–353 (FWII…AGWA).

This sequence belongs to the glycosyltransferase 4 family. MraY subfamily. It depends on Mg(2+) as a cofactor.

It localises to the cell membrane. It carries out the reaction UDP-N-acetyl-alpha-D-muramoyl-L-alanyl-gamma-D-glutamyl-meso-2,6-diaminopimeloyl-D-alanyl-D-alanine + di-trans,octa-cis-undecaprenyl phosphate = di-trans,octa-cis-undecaprenyl diphospho-N-acetyl-alpha-D-muramoyl-L-alanyl-D-glutamyl-meso-2,6-diaminopimeloyl-D-alanyl-D-alanine + UMP. Its pathway is cell wall biogenesis; peptidoglycan biosynthesis. In terms of biological role, catalyzes the initial step of the lipid cycle reactions in the biosynthesis of the cell wall peptidoglycan: transfers peptidoglycan precursor phospho-MurNAc-pentapeptide from UDP-MurNAc-pentapeptide onto the lipid carrier undecaprenyl phosphate, yielding undecaprenyl-pyrophosphoryl-MurNAc-pentapeptide, known as lipid I. The sequence is that of Phospho-N-acetylmuramoyl-pentapeptide-transferase from Streptomyces griseus subsp. griseus (strain JCM 4626 / CBS 651.72 / NBRC 13350 / KCC S-0626 / ISP 5235).